Here is a 756-residue protein sequence, read N- to C-terminus: 5-methyltetrahydropteroyltriglutamate--homocysteine methyltransferase (756 aa).

5-methyltetrahydropteroyltri-L-glutamate-binding positions include 16-19 and lysine 116; that span reads RELK. Residues 435–437 and glutamate 488 contribute to the L-homocysteine site; that span reads IGS. L-methionine-binding positions include 435-437 and glutamate 488; that span reads IGS. 5-methyltetrahydropteroyltri-L-glutamate contacts are provided by residues 519-520 and tryptophan 565; that span reads RC. Aspartate 603 contacts L-homocysteine. An L-methionine-binding site is contributed by aspartate 603. 5-methyltetrahydropteroyltri-L-glutamate is bound at residue glutamate 609. The Zn(2+) site is built by histidine 645, cysteine 647, and glutamate 669. Histidine 698 functions as the Proton donor in the catalytic mechanism. Cysteine 730 is a Zn(2+) binding site.

The protein belongs to the vitamin-B12 independent methionine synthase family. It depends on Zn(2+) as a cofactor.

The catalysed reaction is 5-methyltetrahydropteroyltri-L-glutamate + L-homocysteine = tetrahydropteroyltri-L-glutamate + L-methionine. It participates in amino-acid biosynthesis; L-methionine biosynthesis via de novo pathway; L-methionine from L-homocysteine (MetE route): step 1/1. Catalyzes the transfer of a methyl group from 5-methyltetrahydrofolate to homocysteine resulting in methionine formation. In Marinobacter nauticus (strain ATCC 700491 / DSM 11845 / VT8) (Marinobacter aquaeolei), this protein is 5-methyltetrahydropteroyltriglutamate--homocysteine methyltransferase.